The chain runs to 612 residues: Protein lin-61 (612 aa).

MBT repeat units lie at residues 143 to 249, 263 to 380, 381 to 501, and 508 to 607; these read YLWE…MDKI, NDMV…GYQL, NAKK…LVPP, and FRWD…LQPP.

Interacts preferentially with histone H3 that is dimethylated or trimethylated at 'Lys-9'.

It localises to the nucleus. Its subcellular location is the chromosome. In terms of biological role, synthetic multivulva class B (synMuvB) protein required to repress the induction of vulval development by Ras signaling. Unlike other synMuv proteins it does not associate with the multiprotein DRM complex and the NuRD-like complex. Interaction with methylated histone H3 is essential for vulva development. It has a role in maintaining genome stability. This Caenorhabditis elegans protein is Protein lin-61 (lin-61).